The following is a 478-amino-acid chain: Aspartyl/glutamyl-tRNA(Asn/Gln) amidotransferase subunit B (478 aa).

Belongs to the GatB/GatE family. GatB subfamily. In terms of assembly, heterotrimer of A, B and C subunits.

The catalysed reaction is L-glutamyl-tRNA(Gln) + L-glutamine + ATP + H2O = L-glutaminyl-tRNA(Gln) + L-glutamate + ADP + phosphate + H(+). It catalyses the reaction L-aspartyl-tRNA(Asn) + L-glutamine + ATP + H2O = L-asparaginyl-tRNA(Asn) + L-glutamate + ADP + phosphate + 2 H(+). Functionally, allows the formation of correctly charged Asn-tRNA(Asn) or Gln-tRNA(Gln) through the transamidation of misacylated Asp-tRNA(Asn) or Glu-tRNA(Gln) in organisms which lack either or both of asparaginyl-tRNA or glutaminyl-tRNA synthetases. The reaction takes place in the presence of glutamine and ATP through an activated phospho-Asp-tRNA(Asn) or phospho-Glu-tRNA(Gln). The chain is Aspartyl/glutamyl-tRNA(Asn/Gln) amidotransferase subunit B from Lachnoclostridium phytofermentans (strain ATCC 700394 / DSM 18823 / ISDg) (Clostridium phytofermentans).